We begin with the raw amino-acid sequence, 225 residues long: Pre-mRNA-splicing factor SPF27 (225 aa).

Residues 138-222 (SNDNLALMIE…QGDENKENIR (85 aa)) adopt a coiled-coil conformation.

It belongs to the SPF27 family. As to quaternary structure, component of the pre-catalytic and catalytic spliceosome complexes. Component of the postcatalytic spliceosome P complex.

The protein localises to the nucleus. In terms of biological role, required for pre-mRNA splicing as component of the activated spliceosome. May have a scaffolding role in the spliceosome assembly as it contacts all other components of the core complex. The polypeptide is Pre-mRNA-splicing factor SPF27 (bcas2) (Danio rerio (Zebrafish)).